Consider the following 348-residue polypeptide: D-alanine--D-alanine ligase (348 aa).

Residues 132-334 (KQVLATVGVP…YSDLIEKLVM (203 aa)) form the ATP-grasp domain. 162 to 217 (LETLSFPIFVKPANMGSSVGISKATDESSLRSAIDLALKYDSRILIEQGVTAREIE) provides a ligand contact to ATP. Positions 288, 301, and 303 each coordinate Mg(2+).

Belongs to the D-alanine--D-alanine ligase family. Mg(2+) is required as a cofactor. Mn(2+) serves as cofactor.

It localises to the cytoplasm. The catalysed reaction is 2 D-alanine + ATP = D-alanyl-D-alanine + ADP + phosphate + H(+). It functions in the pathway cell wall biogenesis; peptidoglycan biosynthesis. In terms of biological role, cell wall formation. The chain is D-alanine--D-alanine ligase from Streptococcus agalactiae serotype Ia (strain ATCC 27591 / A909 / CDC SS700).